Reading from the N-terminus, the 693-residue chain is Polyribonucleotide nucleotidyltransferase (693 aa).

Mg(2+) contacts are provided by D490 and D496. One can recognise a KH domain in the interval 557–617 (PRISWFFIDP…EKVQEAVEYI (61 aa)). The region spanning 627–691 (GDLYTGKVTR…DAGRLQFRRL (65 aa)) is the S1 motif domain.

Belongs to the polyribonucleotide nucleotidyltransferase family. Mg(2+) serves as cofactor.

It is found in the cytoplasm. It carries out the reaction RNA(n+1) + phosphate = RNA(n) + a ribonucleoside 5'-diphosphate. Involved in mRNA degradation. Catalyzes the phosphorolysis of single-stranded polyribonucleotides processively in the 3'- to 5'-direction. The polypeptide is Polyribonucleotide nucleotidyltransferase (Fervidobacterium nodosum (strain ATCC 35602 / DSM 5306 / Rt17-B1)).